The sequence spans 33 residues: Alpha-amanitin proprotein (33 aa).

The propeptide occupies 1–10; sequence MSDINATRLP. Residue Ile11 is modified to (3R,4R)-4,5-dihydroxyisoleucine; in form alpha-amanitin. At Ile11 the chain carries (3R,4S)-4-hydroxyisoleucine; in form gamma-amanitin. The cyclopeptide (Ile-Pro) cross-link spans 11–18; the sequence is IWGIGCNP. The segment at residues 12-16 is a cross-link (2'-cysteinyl-6'-hydroxytryptophan sulfoxide (Trp-Cys)); sequence WGIGC. 4-hydroxyproline is present on Pro18. Residues 19–33 constitute a propeptide that is removed on maturation; it reads CVGDEVTALLTRGEA.

It belongs to the MSDIN fungal toxin family. In terms of processing, processed by the macrocyclase-peptidase enzyme POPB to yield a toxic cyclic decapeptide. POPB first removes 10 residues from the N-terminus. Conformational trapping of the remaining peptide forces the enzyme to release this intermediate rather than proceed to macrocyclization. The enzyme rebinds the remaining peptide in a different conformation and catalyzes macrocyclization of the N-terminal 8 residues.

In terms of biological role, major toxin belonging to the bicyclic octapeptides amatoxins that acts by binding non-competitively to RNA polymerase II and greatly slowing the elongation of transcripts from target promoters. This chain is Alpha-amanitin proprotein, found in Amanita fuligineoides.